A 190-amino-acid polypeptide reads, in one-letter code: Potassium-transporting ATPase KdpC subunit (190 aa).

Residues Thr-10–Gly-30 traverse the membrane as a helical segment.

Belongs to the KdpC family. In terms of assembly, the system is composed of three essential subunits: KdpA, KdpB and KdpC.

The protein resides in the cell inner membrane. In terms of biological role, part of the high-affinity ATP-driven potassium transport (or Kdp) system, which catalyzes the hydrolysis of ATP coupled with the electrogenic transport of potassium into the cytoplasm. This subunit acts as a catalytic chaperone that increases the ATP-binding affinity of the ATP-hydrolyzing subunit KdpB by the formation of a transient KdpB/KdpC/ATP ternary complex. The chain is Potassium-transporting ATPase KdpC subunit from Escherichia coli O127:H6 (strain E2348/69 / EPEC).